A 130-amino-acid polypeptide reads, in one-letter code: Small ribosomal subunit protein uS9 (130 aa).

The tract at residues 98–130 (LKRAGFLTRDARKKERKKYGQPGARKRFQYSKR) is disordered. Positions 111-130 (KERKKYGQPGARKRFQYSKR) are enriched in basic residues.

Belongs to the universal ribosomal protein uS9 family.

The polypeptide is Small ribosomal subunit protein uS9 (Sorangium cellulosum (strain So ce56) (Polyangium cellulosum (strain So ce56))).